The primary structure comprises 180 residues: Telokin-like protein 20 (180 aa).

The interval 112–180 is disordered; that stretch reads SKTDAAVHTS…KQKLDNAKQD (69 aa). Residues 156–165 are compositionally biased toward acidic residues; the sequence is DFEENIDDGD.

The sequence is that of Telokin-like protein 20 (TLP20) from Lepidoptera (butterflies and moths).